The primary structure comprises 89 residues: Small ribosomal subunit protein uS15 (89 aa).

It belongs to the universal ribosomal protein uS15 family. Part of the 30S ribosomal subunit. Forms a bridge to the 50S subunit in the 70S ribosome, contacting the 23S rRNA.

Functionally, one of the primary rRNA binding proteins, it binds directly to 16S rRNA where it helps nucleate assembly of the platform of the 30S subunit by binding and bridging several RNA helices of the 16S rRNA. Its function is as follows. Forms an intersubunit bridge (bridge B4) with the 23S rRNA of the 50S subunit in the ribosome. This is Small ribosomal subunit protein uS15 from Nitratiruptor sp. (strain SB155-2).